A 279-amino-acid chain; its full sequence is MIKKYLFPAAGYGTRFLPATKAMPKEMLPVVNKPLIQYGVEEALDAGLNEISIVTGRGKRALEDHFDISYELENQIKGTDKEKYLVGIRKLLDECSFSYTRQTQMKGLGHAILTGRPLIGDEPFAVVLADDLCVNLEGDGVLTQMVKLYQKYRCTIVAVMEVNPTETNKYGVIAGDDIGDGLIRVRDMVEKPAPEDAPSNLAIIGRYILTPDIFKLIEETEPGKGGEIQITDALLKQAKDGCVIAYKFKGQRFDCGGAEGYIEATNFCYEHFYKTGKAY.

This sequence belongs to the UDPGP type 2 family.

It carries out the reaction alpha-D-glucose 1-phosphate + UTP + H(+) = UDP-alpha-D-glucose + diphosphate. Its function is as follows. May play a role in stationary phase survival. The chain is UTP--glucose-1-phosphate uridylyltransferase (galU) from Pseudomonas aeruginosa.